A 272-amino-acid chain; its full sequence is Alcohol dehydrogenase-related 31 kDa protein (272 aa).

Tyr11 to Leu34 is a binding site for NAD(+). Ser139 is a binding site for substrate. The active-site Proton acceptor is the Tyr152.

The protein belongs to the short-chain dehydrogenases/reductases (SDR) family.

The polypeptide is Alcohol dehydrogenase-related 31 kDa protein (Adhr) (Drosophila melanogaster (Fruit fly)).